A 241-amino-acid polypeptide reads, in one-letter code: Leucyl/phenylalanyl-tRNA--protein transferase (241 aa).

It belongs to the L/F-transferase family.

It localises to the cytoplasm. It carries out the reaction N-terminal L-lysyl-[protein] + L-leucyl-tRNA(Leu) = N-terminal L-leucyl-L-lysyl-[protein] + tRNA(Leu) + H(+). The enzyme catalyses N-terminal L-arginyl-[protein] + L-leucyl-tRNA(Leu) = N-terminal L-leucyl-L-arginyl-[protein] + tRNA(Leu) + H(+). It catalyses the reaction L-phenylalanyl-tRNA(Phe) + an N-terminal L-alpha-aminoacyl-[protein] = an N-terminal L-phenylalanyl-L-alpha-aminoacyl-[protein] + tRNA(Phe). Functionally, functions in the N-end rule pathway of protein degradation where it conjugates Leu, Phe and, less efficiently, Met from aminoacyl-tRNAs to the N-termini of proteins containing an N-terminal arginine or lysine. The sequence is that of Leucyl/phenylalanyl-tRNA--protein transferase from Neisseria meningitidis serogroup B (strain ATCC BAA-335 / MC58).